A 58-amino-acid chain; its full sequence is Small ribosomal subunit protein bS21 (58 aa).

Positions 35-58 (REHYEKPSVKKKKKSEAARKRKFK) are disordered. Residues 43–58 (VKKKKKSEAARKRKFK) show a composition bias toward basic residues.

The protein belongs to the bacterial ribosomal protein bS21 family.

In Clostridium botulinum (strain Alaska E43 / Type E3), this protein is Small ribosomal subunit protein bS21.